The primary structure comprises 800 residues: Fibroblast growth factor receptor 4 (800 aa).

Positions 1–16 (MWLLLALLSIFQETPA) are cleaved as a signal peptide. Ig-like C2-type domains follow at residues 17 to 115 (FSLE…LIMD), 148 to 236 (PQRM…YLLD), and 245 to 345 (PILQ…AWLT). Topologically, residues 17-367 (FSLEASEEME…TATSEARYTD (351 aa)) are extracellular. Cys-54 and Cys-98 are oxidised to a cystine. Asn-109 carries N-linked (GlcNAc...) asparagine glycosylation. A disulfide bond links Cys-168 and Cys-220. N-linked (GlcNAc...) asparagine glycosylation is found at Asn-254, Asn-286, and Asn-307. Cys-267 and Cys-329 are disulfide-bonded. Residues 368-388 (IILYVSGSLALVLLLLLAGVY) traverse the membrane as a helical segment. The Cytoplasmic portion of the chain corresponds to 389-800 (HRQAIHGHHS…PFPFPEAQTT (412 aa)). A Protein kinase domain is found at 465–753 (LVLGKPLGEG…VLLAVSEEYL (289 aa)). Residues 471-479 (LGEGCFGQV) and Lys-501 contribute to the ATP site. At Ser-571 the chain carries Phosphoserine. The active-site Proton acceptor is the Asp-610. Phosphotyrosine; by autocatalysis is present on residues Tyr-640, Tyr-641, and Tyr-752. Positions 768 to 800 (DASSTCSSSDSVFSHDPLPLEPSPFPFPEAQTT) are disordered. The span at 770-781 (SSTCSSSDSVFS) shows a compositional bias: low complexity.

It belongs to the protein kinase superfamily. Tyr protein kinase family. Fibroblast growth factor receptor subfamily. As to quaternary structure, monomer. Homodimer after ligand binding. Interacts with FGF1, FGF2, FGF4, FGF6, FGF8, FGF9, FGF16, FGF17, FGF18, FGF19, FGF21 and FGF23 (in vitro). Binding affinity for FGF family members is enhanced by interactions between FGFs and heparan sulfate proteoglycans. Interacts with KLB; this strongly increases the affinity for FGF19 and FGF23. Affinity for FGF19 is strongly increased by KLB and sulfated glycosaminoglycans. KLB and KL both interact with the core-glycosylated FGFR4 in the endoplasmic reticulum and promote its degradation, so that only FGFR4 with fully mature N-glycans is expressed at the cell surface. Identified in a complex with NCAM1, CDH2, PLCG1, FRS2, SRC, SHC1, GAP43 and CTTN. Interacts with MMP14 and HIP1. Interacts with STAT3. Post-translationally, N-glycosylated. Full maturation of the glycan chains in the Golgi is essential for high affinity interaction with FGF19. In terms of processing, ubiquitinated. Subject to proteasomal degradation when not fully glycosylated. Autophosphorylated. Binding of FGF family members together with heparan sulfate proteoglycan or heparin promotes receptor dimerization and autophosphorylation on tyrosine residues. Autophosphorylation occurs in trans between the two FGFR molecules present in the dimer.

It localises to the cell membrane. The protein resides in the endosome. The protein localises to the endoplasmic reticulum. It catalyses the reaction L-tyrosyl-[protein] + ATP = O-phospho-L-tyrosyl-[protein] + ADP + H(+). With respect to regulation, present in an inactive conformation in the absence of bound ligand. Ligand binding leads to dimerization and activation by autophosphorylation on tyrosine residues. Functionally, tyrosine-protein kinase that acts as a cell-surface receptor for fibroblast growth factors and plays a role in the regulation of cell proliferation, differentiation and migration, and in regulation of lipid metabolism, bile acid biosynthesis, glucose uptake, vitamin D metabolism and phosphate homeostasis. Required for normal down-regulation of the expression of CYP7A1, the rate-limiting enzyme in bile acid synthesis, in response to FGF19. Phosphorylates PLCG1 and FRS2. Ligand binding leads to the activation of several signaling cascades. Activation of PLCG1 leads to the production of the cellular signaling molecules diacylglycerol and inositol 1,4,5-trisphosphate. Phosphorylation of FRS2 triggers recruitment of GRB2, GAB1, PIK3R1 and SOS1, and mediates activation of RAS, MAPK1/ERK2, MAPK3/ERK1 and the MAP kinase signaling pathway, as well as of the AKT1 signaling pathway. Promotes SRC-dependent phosphorylation of the matrix protease MMP14 and its lysosomal degradation. FGFR4 signaling is down-regulated by receptor internalization and degradation; MMP14 promotes internalization and degradation of FGFR4. This is Fibroblast growth factor receptor 4 (Fgfr4) from Rattus norvegicus (Rat).